Here is a 223-residue protein sequence, read N- to C-terminus: uncharacterized protein (223 aa).

It to M.jannaschii MJ1453.

This is an uncharacterized protein from Methanothermobacter thermautotrophicus (strain ATCC 29096 / DSM 1053 / JCM 10044 / NBRC 100330 / Delta H) (Methanobacterium thermoautotrophicum).